The following is a 388-amino-acid chain: Protein TsgA homolog (388 aa).

Helical transmembrane passes span 11–31 (WISFLSYAFTGALVVVTGMIM), 50–70 (TFLNAGILVSIFINSWLIEII), 77–97 (IFSFILTIIAVIGIVLCNSIF), 101–121 (INMFILGLVSGITMSIGTFII), 133–153 (LLLLTDSFFSMSGMIFPIVTA), 160–180 (IIWYWSYICIGAIYLLIFLLT), 206–226 (VFLLSISALLYILGQLGFISW), 244–264 (SLVSGFWMSYMLGMWFFSFII), 268–288 (NLYRMFIFLTSMSTILMYCFI), 298–318 (YIIISLGFFSSAIYTIIITLA), 332–352 (LILLFGTIGTFLTFIITSPIV), and 360–380 (TLISSNILYGIVFFLSILIYF).

Belongs to the major facilitator superfamily. TsgA family.

It localises to the cell membrane. This is Protein TsgA homolog from Buchnera aphidicola subsp. Acyrthosiphon pisum (strain 5A).